The primary structure comprises 927 residues: Phosphoenolpyruvate carboxylase (927 aa).

Residues His160 and Lys589 contribute to the active site.

This sequence belongs to the PEPCase type 1 family. It depends on Mg(2+) as a cofactor.

It carries out the reaction oxaloacetate + phosphate = phosphoenolpyruvate + hydrogencarbonate. Forms oxaloacetate, a four-carbon dicarboxylic acid source for the tricarboxylic acid cycle. The sequence is that of Phosphoenolpyruvate carboxylase from Rhodopseudomonas palustris (strain BisA53).